The primary structure comprises 118 residues: Non-specific lipid-transfer protein 2 (118 aa).

The first 25 residues, 1–25, serve as a signal peptide directing secretion; that stretch reads MARGMKLACVVLVICMVVIAPMAEG. 4 disulfide bridges follow: C29/C76, C39/C53, C54/C99, and C74/C113.

The protein belongs to the plant LTP family.

In terms of biological role, plant non-specific lipid-transfer proteins transfer phospholipids as well as galactolipids across membranes. May play a role in wax or cutin deposition in the cell walls of expanding epidermal cells and certain secretory tissues. Binds saturated fatty acids, jasmonic acid and, with highest efficiency, unsaturated fatty acids and lysolipids. This chain is Non-specific lipid-transfer protein 2, found in Lens culinaris (Lentil).